Consider the following 405-residue polypeptide: Secreted aspartic protease 8 (405 aa).

An N-terminal signal peptide occupies residues 1–25 (MVSIITFTKNVLVTLAFALLAQGLA). A glycan (N-linked (GlcNAc...) asparagine) is linked at Asn-50. Residues 52–78 (TAHGQHHQSQQQQQQQQQQPAQKRGTV) form a disordered region. Residues 58–70 (HQSQQQQQQQQQQ) show a composition bias toward low complexity. The Peptidase A1 domain occupies 89–392 (YAATITVGSN…DLDGNTISLA (304 aa)). Asp-107 is an active-site residue. 107-109 (DTG) serves as a coordination point for pepstatin A. An intrachain disulfide couples Cys-122 to Cys-134. The active site involves Asp-292. Residue 292 to 296 (DSGTT) coordinates pepstatin A. Residues Cys-327 and Cys-358 are joined by a disulfide bond.

The protein belongs to the peptidase A1 family. As to quaternary structure, monomer.

The protein resides in the secreted. The enzyme catalyses Preferential cleavage at the carboxyl of hydrophobic amino acids, but fails to cleave 15-Leu-|-Tyr-16, 16-Tyr-|-Leu-17 and 24-Phe-|-Phe-25 of insulin B chain. Activates trypsinogen, and degrades keratin.. Secreted aspartic peptidases (SAPs) are a group of ten acidic hydrolases considered as key virulence factors. These enzymes supply the fungus with nutrient amino acids as well as are able to degrade the selected host's proteins involved in the immune defense. Moreover, acts toward human hemoglobin though limited proteolysis to generate a variety of antimicrobial hemocidins, enabling to compete with the other microorganisms of the same physiological niche using the microbicidal peptides generated from the host protein. Its function is as follows. Plays a key role in defense against host by cleaving histatin-5 (Hst 5), a peptide from human saliva that carries out fungicidal activity. The cleavage rate decreases in an order of SAP2 &gt; SAP9 &gt; SAP3 &gt; SAP7 &gt; SAP4 &gt; SAP1 &gt; SAP8. The hydrolysis of Hst 5 by SAP8 causes production of the DSHAKRHHGY, HHSHRGY and FHEKHHSHRGY peptides. This is Secreted aspartic protease 8 from Candida albicans (Yeast).